Here is a 662-residue protein sequence, read N- to C-terminus: Probable actin-related protein 8 (662 aa).

2 stretches are compositionally biased toward basic and acidic residues: residues 50–59 and 67–77; these read AGEKDAKETE and TKQDDSKKSQV. Positions 50 to 92 are disordered; sequence AGEKDAKETESESANGDTKQDDSKKSQVEEEEDGIEESELGEE. Residues 78–89 are compositionally biased toward acidic residues; that stretch reads EEEEDGIEESEL. 339–342 contacts ATP; it reads DMGA.

Belongs to the actin family. As to quaternary structure, component of the chromatin remodeling Ino80 complex. Exists as monomers and dimers, but the dimer is most probably the biologically relevant form required for stable interactions with histones that exploits the twofold symmetry of the nucleosome core.

It is found in the nucleus. Probably involved in transcription regulation via its interaction with the INO80 complex, a chromatin remodeling complex. Exhibits low basal ATPase activity, and unable to polymerize. Strongly prefer nucleosomes and H3-H4 tetramers over H2A-H2B dimers, suggesting it may act as a nucleosome recognition module within the complex. This chain is Probable actin-related protein 8, found in Schizosaccharomyces pombe (strain 972 / ATCC 24843) (Fission yeast).